Reading from the N-terminus, the 300-residue chain is NAD kinase (300 aa).

The active-site Proton acceptor is the Asp75. NAD(+) contacts are provided by residues 75–76 (DG), 149–150 (ND), Arg177, Asp179, 190–195 (TAYALS), Ala214, and Gln248.

It belongs to the NAD kinase family. A divalent metal cation is required as a cofactor.

The protein resides in the cytoplasm. The enzyme catalyses NAD(+) + ATP = ADP + NADP(+) + H(+). Involved in the regulation of the intracellular balance of NAD and NADP, and is a key enzyme in the biosynthesis of NADP. Catalyzes specifically the phosphorylation on 2'-hydroxyl of the adenosine moiety of NAD to yield NADP. In Burkholderia vietnamiensis (strain G4 / LMG 22486) (Burkholderia cepacia (strain R1808)), this protein is NAD kinase.